We begin with the raw amino-acid sequence, 493 residues long: D-aminoacyl-tRNA deacylase (493 aa).

Positions 22-37 (DLGDWERRDDPSRPDA) are enriched in basic and acidic residues. 2 disordered regions span residues 22 to 44 (DLGDWERRDDPSRPDADGGGTYY) and 441 to 493 (PEGP…EPSE).

It belongs to the DtdA deacylase family. Monomer. Zn(2+) is required as a cofactor.

It catalyses the reaction a D-aminoacyl-tRNA + H2O = a tRNA + a D-alpha-amino acid + H(+). The enzyme catalyses glycyl-tRNA(Ala) + H2O = tRNA(Ala) + glycine + H(+). Functionally, D-aminoacyl-tRNA deacylase with broad substrate specificity. By recycling D-aminoacyl-tRNA to D-amino acids and free tRNA molecules, this enzyme counteracts the toxicity associated with the formation of D-aminoacyl-tRNA entities in vivo. This chain is D-aminoacyl-tRNA deacylase, found in Halorubrum lacusprofundi (strain ATCC 49239 / DSM 5036 / JCM 8891 / ACAM 34).